Consider the following 517-residue polypeptide: MGKKGSWFSAIKRVFTPHSKEKQLSNNNQEPEIKSENKEKKKKGFGKKLRNGETNSFLPIFRQPSSIEKILSEAEREHNLVFRPPTPTDRANSSSTSVASPLVRPASPKVPSQRYVSSPKPISPRVAYPQVHYPKPPSPKPPSPRAVSPRIVQRREFVHRPEPSLLVKNAYAIKIQAAFRGYMARRSFRALKGLVRLQGVVRGHSVKRQTMNAMKYMQLLVRVQTQVQSRRIQMLENRARNDKDDTKLVSSRMSDDWDDSVLTKEEKDVRLHRKIDAMIKRERSMAYAYSHQLWKNSPKSAQDIRTSGFPLWWNWVDRQKNQNQPFRLTPTRPSLSPQPQSSNQNHFRLNNSFDTSTPNSSKSTFVTPSRPIHTPQPYSSSVSRYSRGGGRATQDSPFKDDDSLTSCPPFSAPSYMAPTVSAKAKLRANSNPKERMDRTPVSTNEKRRSSFPLGSFKWNKGSLFMSNNSNNKGPGSSSSGAVVLEKHKTLKSVGNLSIDSTVSMPATIGRRAFNRFA.

The tract at residues 1-11 is calmodulin-binding; sequence MGKKGSWFSAI. Disordered stretches follow at residues 1-60 and 81-147; these read MGKK…FLPI and VFRP…PRAV. The segment covering 40–49 has biased composition (basic residues); that stretch reads KKKKGFGKKL. Over residues 89 to 99 the composition is skewed to polar residues; the sequence is DRANSSSTSVA. Residues 134 to 144 are compositionally biased toward pro residues; the sequence is PKPPSPKPPSP. 2 consecutive IQ domains span residues 168–196 and 197–218; these read KNAY…GLVR and LQGV…KYMQ. Disordered regions lie at residues 324–407 and 425–452; these read QPFR…LTSC and KLRA…SSFP. Over residues 328–342 the composition is skewed to low complexity; it reads LTPTRPSLSPQPQSS. Polar residues predominate over residues 343–367; it reads NQNHFRLNNSFDTSTPNSSKSTFVT. A compositionally biased stretch (basic and acidic residues) spans 432–448; it reads PKERMDRTPVSTNEKRR.

The protein belongs to the IQD family. Binds to multiple calmodulin (CaM) in the presence of Ca(2+) and CaM-like proteins. As to expression, expressed in vessels of roots, cotyledons and leaves, as well as in trichomes.

Its subcellular location is the cell membrane. The protein localises to the cytoplasm. It localises to the cytoskeleton. May be involved in cooperative interactions with calmodulins or calmodulin-like proteins. Recruits calmodulin proteins to microtubules, thus being a potential scaffold in cellular signaling and trafficking. Regulates the formation of oval xylem secondary cell-wall deposition pits through microtubule-dependent lateral inhibition of Rho GTPase domains, thus confining the area of active ROP domains within the lattice of the cortical microtubules. May associate with nucleic acids and regulate gene expression at the transcriptional or post-transcriptional level. This chain is Protein IQ-DOMAIN 13, found in Arabidopsis thaliana (Mouse-ear cress).